A 363-amino-acid chain; its full sequence is MKTLSILVMAGGTGGHVFPALAVAEELRARGALVEWLGTAKGIENTLVPKANIPLNLISVEGVRGRGLTGLLKAPFLITKAVFQAISIIRKMNADLVLGFGGFASGPGGVAARLLGKPLVIHEQNAVAGTTNRLLARIAQRVLAAFDGAFHNTSTRVVKVVGNPVRPSIYQLPPVAERYQARAQEHPHLLVLGGSLGAKAINELLPMALAQLNEGQRPEVWHQTGKAHGESTAALYLQQQVNARVEPFIEDMAAAYAWADLVICRAGALTVSELMAAGVASALIPLPTAIDDHQTRNAHILASANAGVALVQQTLTAADLAALLSTTLADRPALMAMAQRAQHLAHPNAAATVANVCVEVAHG.

UDP-N-acetyl-alpha-D-glucosamine contacts are provided by residues 13–15 (TGG), Asn-125, Arg-166, Ser-195, Ile-249, 268–273 (ALTVSE), and Gln-294.

Belongs to the glycosyltransferase 28 family. MurG subfamily.

It localises to the cell inner membrane. It carries out the reaction di-trans,octa-cis-undecaprenyl diphospho-N-acetyl-alpha-D-muramoyl-L-alanyl-D-glutamyl-meso-2,6-diaminopimeloyl-D-alanyl-D-alanine + UDP-N-acetyl-alpha-D-glucosamine = di-trans,octa-cis-undecaprenyl diphospho-[N-acetyl-alpha-D-glucosaminyl-(1-&gt;4)]-N-acetyl-alpha-D-muramoyl-L-alanyl-D-glutamyl-meso-2,6-diaminopimeloyl-D-alanyl-D-alanine + UDP + H(+). The protein operates within cell wall biogenesis; peptidoglycan biosynthesis. Its function is as follows. Cell wall formation. Catalyzes the transfer of a GlcNAc subunit on undecaprenyl-pyrophosphoryl-MurNAc-pentapeptide (lipid intermediate I) to form undecaprenyl-pyrophosphoryl-MurNAc-(pentapeptide)GlcNAc (lipid intermediate II). The polypeptide is UDP-N-acetylglucosamine--N-acetylmuramyl-(pentapeptide) pyrophosphoryl-undecaprenol N-acetylglucosamine transferase (Cellvibrio japonicus (strain Ueda107) (Pseudomonas fluorescens subsp. cellulosa)).